Consider the following 206-residue polypeptide: Large ribosomal subunit protein eL13z (206 aa).

The tract at residues 183–206 (ERTNKRHAGARAKRAADAEKEEKK) is disordered. A compositionally biased stretch (basic residues) spans 186-195 (NKRHAGARAK). Residues 196 to 206 (RAADAEKEEKK) show a composition bias toward basic and acidic residues.

This sequence belongs to the eukaryotic ribosomal protein eL13 family.

The sequence is that of Large ribosomal subunit protein eL13z from Brassica napus (Rape).